Consider the following 215-residue polypeptide: Protein FAM167A (215 aa).

Disordered regions lie at residues 1-26 (MSVP…PPDD) and 63-109 (RPAA…LTTG). Positions 124–157 (LRKELAEMRLQDQQLARQLMRLRGDINKLKIEQT) form a coiled coil.

The protein belongs to the FAM167 (SEC) family.

This chain is Protein FAM167A (Fam167a), found in Mus musculus (Mouse).